Here is a 333-residue protein sequence, read N- to C-terminus: Phosphate acyltransferase (333 aa).

It belongs to the PlsX family. In terms of assembly, homodimer. Probably interacts with PlsY.

The protein localises to the cytoplasm. The enzyme catalyses a fatty acyl-[ACP] + phosphate = an acyl phosphate + holo-[ACP]. It functions in the pathway lipid metabolism; phospholipid metabolism. Its function is as follows. Catalyzes the reversible formation of acyl-phosphate (acyl-PO(4)) from acyl-[acyl-carrier-protein] (acyl-ACP). This enzyme utilizes acyl-ACP as fatty acyl donor, but not acyl-CoA. The polypeptide is Phosphate acyltransferase (Lactobacillus johnsonii (strain CNCM I-12250 / La1 / NCC 533)).